The primary structure comprises 235 residues: Uridylate kinase (235 aa).

Position 9–12 (9–12 (KLSG)) interacts with ATP. Position 51 (glycine 51) interacts with UMP. 2 residues coordinate ATP: glycine 52 and arginine 56. UMP contacts are provided by residues aspartate 71 and 132 to 139 (TGNPYFTT). ATP is bound by residues threonine 159, tyrosine 165, and aspartate 168.

Belongs to the UMP kinase family. As to quaternary structure, homohexamer.

It localises to the cytoplasm. The enzyme catalyses UMP + ATP = UDP + ADP. It participates in pyrimidine metabolism; CTP biosynthesis via de novo pathway; UDP from UMP (UMPK route): step 1/1. Its activity is regulated as follows. Inhibited by UTP. Functionally, catalyzes the reversible phosphorylation of UMP to UDP. In Christiangramia forsetii (strain DSM 17595 / CGMCC 1.15422 / KT0803) (Gramella forsetii), this protein is Uridylate kinase.